The following is a 580-amino-acid chain: Laccase-20 (580 aa).

The first 23 residues, 1–23 (MVASLLCTVAVAVLAVAAVGGEA), serve as a signal peptide directing secretion. 2 Plastocyanin-like domains span residues 31–147 (VVHE…PRDG) and 156–310 (KDVP…YTSA). Residues Asn-36 and Asn-42 are each glycosylated (N-linked (GlcNAc...) asparagine). His-81 and His-83 together coordinate Cu cation. N-linked (GlcNAc...) asparagine glycosylation is present at Asn-115. Residues His-126 and His-128 each coordinate Cu cation. N-linked (GlcNAc...) asparagine glycans are attached at residues Asn-200, Asn-339, Asn-392, Asn-429, and Asn-460. The Plastocyanin-like 3 domain maps to 419–561 (DFPVRPPRPY…ATAFIVEDGP (143 aa)). Residues Asn-478, His-481, His-483, His-540, Cys-541, His-542, His-546, and Met-551 each coordinate Cu cation. The tract at residues 560–580 (GPTPETSLPPPPPEFKRCDAS) is disordered.

It belongs to the multicopper oxidase family. Requires Cu cation as cofactor.

Its subcellular location is the secreted. The protein localises to the extracellular space. It is found in the apoplast. The enzyme catalyses 4 hydroquinone + O2 = 4 benzosemiquinone + 2 H2O. Lignin degradation and detoxification of lignin-derived products. In Oryza sativa subsp. indica (Rice), this protein is Laccase-20 (LAC20).